A 395-amino-acid polypeptide reads, in one-letter code: Serine/threonine-protein kinase BIK1 (395 aa).

Gly-2 is lipidated: N-myristoyl glycine. Cys-4 is lipidated: S-palmitoyl cysteine. At Ser-26 the chain carries Phosphoserine. Residue Lys-31 forms a Glycyl lysine isopeptide (Lys-Gly) (interchain with G-Cter in ubiquitin) linkage. 3 positions are modified to phosphoserine: Ser-32, Ser-33, and Ser-34. A Phosphothreonine modification is found at Thr-35. A Glycyl lysine isopeptide (Lys-Gly) (interchain with G-Cter in ubiquitin) cross-link involves residue Lys-41. The residue at position 42 (Thr-42) is a Phosphothreonine. Residue Ser-48 is modified to Phosphoserine; by autocatalysis and BAK1. The residue at position 50 (Thr-50) is a Phosphothreonine. Ser-54 is subject to Phosphoserine; by autocatalysis. Thr-56 bears the Phosphothreonine; by autocatalysis mark. At Thr-64 the chain carries Phosphothreonine. Residues 67–356 (FRPDSVIGEG…RALQQLQDNL (290 aa)) form the Protein kinase domain. Phosphoserine; by autocatalysis and BAK1 is present on Ser-71. 73–81 (IGEGGFGCV) serves as a coordination point for ATP. Ser-89 carries the post-translational modification Phosphoserine; by EFR. The short motif at 89-90 (ST) is the Required for physical interaction with and phosphorylation of downstream signaling proteins (e.g. WRKY33, WRKY50, WRKY51 and WRKY57) to activate EFR-mediated immune signaling element. Phosphothreonine; by EFR is present on Thr-90. Lys-95 participates in a covalent cross-link: Glycyl lysine isopeptide (Lys-Gly) (interchain with G-Cter in ubiquitin). Lys-105 serves as a coordination point for ATP. Thr-120 is subject to Phosphothreonine; by EFR. A Phosphoserine; by autocatalysis modification is found at Ser-129. Phosphoserine; by EFR is present on Ser-129. Tyr-150 carries the phosphotyrosine modification. The residue at position 168 (Tyr-168) is a Phosphotyrosine; by autocatalysis. Glycyl lysine isopeptide (Lys-Gly) (interchain with G-Cter in ubiquitin) cross-links involve residues Lys-170 and Lys-186. A Phosphoserine modification is found at Ser-193. Asp-202 acts as the Proton acceptor in catalysis. Position 206 is a phosphoserine; by autocatalysis and BAK1 (Ser-206). Tyr-214 is modified (phosphotyrosine; by autocatalysis). The residue at position 219 (Ser-219) is a Phosphoserine. A Phosphoserine; by autocatalysis modification is found at Ser-233. Ser-236 is subject to O-UMP-serine; by Xanthomonas campestris effector XopAC/AvrAC; alternate. Residue Ser-236 is modified to Phosphoserine; by autocatalysis and BAK1; alternate. Thr-237 carries the post-translational modification O-UMP-threonine; by Xanthomonas campestris effector XopAC/AvrAC; alternate. Thr-237 is modified (phosphothreonine; by autocatalysis and BAK1; alternate). Thr-242 carries the post-translational modification Phosphothreonine; by autocatalysis and BAK1. Tyr-243 is subject to Phosphotyrosine. Phosphotyrosine; by autocatalysis is present on Tyr-250. Phosphoserine; by autocatalysis occurs at positions 252 and 253. Lys-286 participates in a covalent cross-link: Glycyl lysine isopeptide (Lys-Gly) (interchain with G-Cter in ubiquitin). Thr-314 carries the phosphothreonine; by autocatalysis modification. Residue Lys-337 forms a Glycyl lysine isopeptide (Lys-Gly) (interchain with G-Cter in ubiquitin) linkage. Thr-341 carries the post-translational modification Phosphothreonine. Residues 354–365 (DNLGKPSQTNPV) are compositionally biased toward polar residues. Residues 354–395 (DNLGKPSQTNPVKDTKKLGFKTGTTKSSEKRFTQKPFGRHLV) are disordered. A Glycyl lysine isopeptide (Lys-Gly) (interchain with G-Cter in ubiquitin) cross-link involves residue Lys-358. Phosphoserine; by autocatalysis and BAK1 is present on Ser-360. A Phosphothreonine; by autocatalysis and BAK1 modification is found at Thr-362. A Glycyl lysine isopeptide (Lys-Gly) (interchain with G-Cter in ubiquitin) cross-link involves residue Lys-366. Thr-368 bears the Phosphothreonine; by autocatalysis and BAK1 mark. Residues Thr-375 and Thr-377 each carry the phosphothreonine modification.

Belongs to the protein kinase superfamily. Ser/Thr protein kinase family. In terms of assembly, interacts with FLS2. Activation of FLS2 by flagellin (flg22) induces the dissociation of the complex. Interacts with BAK1. Interacts with the Xanthomonas campestris effector XopAC/AvrAC. Interacts with CPK28. Interacts with PEPR1. Interacts with PP2C38. Interacts with BRI1. Interacts with RBOHD. Binds to EFR when not phosphorylated at Ser-89 and Thr-90, in the absence of pathogen elicitor; dissociates upon pathogen-associated molecular pattern (PAMP)-triggered activation by EFR-mediated phosphorylation. Interacts directly with and phosphorylates WRKY transcription factors in the nucleus involved in the jasmonic acid (JA) and salicylic acid (SA) regulation (e.g. WRKY33, WRKY50, WRKY51 and WRKY57) to modulate defense hormones during plant immunity. Binds to ATL44/RHA3A and ATL45/RHA3B. Binds to SIK1 to be phosphorylated and stabilized. In terms of processing, phosphorylated by SIK1 to be stabilized. Phosphorylated by FLS2 and BAK1. Autophosphorylated. Autophosphorylation is reduced in presence of the Xanthomonas campestris effector XopAC/AvrAC. Phosphorylated, especially by EFR at Ser-89 and Thr-90, in response to the microbe-associated molecular pattern (MAMP) flg22. Phosphorylation in response to flg22 is abolished in presence of the Xanthomonas campestris effector XopAC/AvrAC. Phosphorylated at Ser-233, Ser-236 and Thr-237 by PEPR1. Phosphorylated at Tyr-150, Tyr-243 and Tyr-250. Tyrosine phosphorylation is required for BIK1 function in plant innate immunity. Post-translationally, uridylylated at Ser-236 and Thr-237 by the Xanthomonas campestris effector XopAC/AvrAC. This conceals conserved phosphorylation sites in the activation loop, reducing BIK1 kinase activity and consequently inhibiting downstream signaling. Monoubiquitinated by ATL44/RHA3A and ATL45/RHA3B following phosphorylation upon the recognition of microbe-associated molecular patterns (MAMPs, e.g. flg22) by pattern recognition receptors (PRRs), then released from the FLS2/BAK1 complex and internalized dynamically into endocytic compartments followed by the activation of immune signaling.

The protein resides in the cell membrane. The protein localises to the endosome membrane. It is found in the nucleus. The enzyme catalyses L-seryl-[protein] + ATP = O-phospho-L-seryl-[protein] + ADP + H(+). It catalyses the reaction L-threonyl-[protein] + ATP = O-phospho-L-threonyl-[protein] + ADP + H(+). Kinase activation is repressed by the phosphatase PP2C38. Plays a central role in immune responses. Required to activate the resistance responses to necrotrophic pathogens, including the regulation of defense hormone expression (e.g. jasmonic acid (JA) and salicylic acid (SA)). Phosphorylates FLS2 and BAK1. Involved in pathogen-associated molecular pattern (PAMP)-triggered immunity (PTI) signaling, including calcium signaling, and defense responses downstream of FLS2; upon PAMP recognition, first phosphorylated by FLS2 and SIK1 prior to being monoubiquitinated by ATL44/RHA3A and ATL45/RHA3B at the plasma membrane, then internalized dynamically into endocytic compartments together with FLS2. Acts additively with PBL1 in PTI defenses. Acts as a positive regulator of the PAMP flg22-induced increase of cytosolic calcium. Upon flg22 perception, phosphorylates and activates the calcium-permeable channel OSCA1.3, promoting stomatal closure. Phosphorylates the NADPH oxidase RBOHD at specific sites in a calcium-independent manner to enhance reactive oxygen species (ROS) generation upon flg22 perception. ROS production in response to flg22 controls stomatal movement and restriction of bacterial entry into leaf tissues. Seems not required for flg22-induced MAPK activation. Required for Pep1-induced defenses. Pep1 is an endogenous elicitor that potentiates PAMP-inducible plant responses. In association with PEPR1, acts downstream of the canonical ethylene signaling cascade to regulate ethylene responses. Involved in ethylene signaling. Destabilizes EIN3, the key transcription activator in ethylene signaling, and represses EIN3-dependent transcription. Acts as a negative regulator in brassinosteroid (BR) signaling. Functions in BR signaling by direct interaction with the BR receptor BRI1 cytosolic kinase domain. Required during SCOOP small peptides (e.g. SCOOP10 and SCOOP12) perception and signaling; receptor-like cytosolic kinases (RLCK) activated by BAK1/SERK3 and SERK4 coreceptors when associated with MIK2 upon the perception of SCOOP peptides. Functionally, (Microbial infection) Xanthomonas campestris effector AvrAC/XopAC-mediated uridylylation prevents activation by phosphorylation at the same residues, thus affecting immune responses and reducing defense responses toward X.campestris, mediating avrAC/XopAC virulence functions. The polypeptide is Serine/threonine-protein kinase BIK1 (Arabidopsis thaliana (Mouse-ear cress)).